The following is a 171-amino-acid chain: Putative auxin-responsive protein IAA29 (171 aa).

Positions 19–114 (SRFVKVFMHG…TVKKIYIVPA (96 aa)) constitute a PB1 domain. The disordered stretch occupies residues 117–171 (QNENDYQEEEEDNAAAAATADEDGDGAAADDGVAAAADDVDDVAGYTSNDDPSFD). The segment covering 142 to 153 (GAAADDGVAAAA) has biased composition (low complexity). The segment covering 162–171 (YTSNDDPSFD) has biased composition (polar residues).

Belongs to the Aux/IAA family. As to quaternary structure, homodimers and heterodimers.

It is found in the nucleus. Functionally, aux/IAA proteins are short-lived transcriptional factors that function as repressors of early auxin response genes at low auxin concentrations. The polypeptide is Putative auxin-responsive protein IAA29 (IAA29) (Oryza sativa subsp. japonica (Rice)).